The sequence spans 251 residues: UPF0309 protein SGR_3073 (251 aa).

The region spanning 36-221 (VADTVASGGR…EQLVARGIEP (186 aa)) is the SIS domain.

The protein belongs to the UPF0309 family.

In Streptomyces griseus subsp. griseus (strain JCM 4626 / CBS 651.72 / NBRC 13350 / KCC S-0626 / ISP 5235), this protein is UPF0309 protein SGR_3073.